Reading from the N-terminus, the 919-residue chain is Isoleucine--tRNA ligase (919 aa).

The 'HIGH' region motif lies at 59–69 (PYANGHLHIGH). Residue Glu570 participates in L-isoleucyl-5'-AMP binding. The 'KMSKS' region motif lies at 611-615 (KMSKS). Lys614 lines the ATP pocket. Zn(2+) contacts are provided by Cys893, Cys896, Cys908, and Cys911.

It belongs to the class-I aminoacyl-tRNA synthetase family. IleS type 1 subfamily. As to quaternary structure, monomer. Zn(2+) serves as cofactor.

The protein localises to the cytoplasm. The enzyme catalyses tRNA(Ile) + L-isoleucine + ATP = L-isoleucyl-tRNA(Ile) + AMP + diphosphate. In terms of biological role, catalyzes the attachment of isoleucine to tRNA(Ile). As IleRS can inadvertently accommodate and process structurally similar amino acids such as valine, to avoid such errors it has two additional distinct tRNA(Ile)-dependent editing activities. One activity is designated as 'pretransfer' editing and involves the hydrolysis of activated Val-AMP. The other activity is designated 'posttransfer' editing and involves deacylation of mischarged Val-tRNA(Ile). The protein is Isoleucine--tRNA ligase of Campylobacter curvus (strain 525.92).